The following is a 94-amino-acid chain: Co-chaperonin GroES (94 aa).

Belongs to the GroES chaperonin family. In terms of assembly, heptamer of 7 subunits arranged in a ring. Interacts with the chaperonin GroEL.

It localises to the cytoplasm. In terms of biological role, together with the chaperonin GroEL, plays an essential role in assisting protein folding. The GroEL-GroES system forms a nano-cage that allows encapsulation of the non-native substrate proteins and provides a physical environment optimized to promote and accelerate protein folding. GroES binds to the apical surface of the GroEL ring, thereby capping the opening of the GroEL channel. The protein is Co-chaperonin GroES of Lactobacillus delbrueckii subsp. bulgaricus (strain ATCC BAA-365 / Lb-18).